An 82-amino-acid polypeptide reads, in one-letter code: Delta-conotoxin-like CnVIA (82 aa).

A signal peptide spans M1 to A22. Positions D23–N49 are excised as a propeptide. Cystine bridges form between C54/C69, C61/C73, and C68/C78.

It belongs to the conotoxin O1 superfamily. As to expression, expressed by the venom duct.

The protein resides in the secreted. In terms of biological role, delta-conotoxins bind to site 6 of voltage-gated sodium channels (Nav) and inhibit the inactivation process. This is Delta-conotoxin-like CnVIA from Conus consors (Singed cone).